The chain runs to 1217 residues: ATP-dependent helicase/nuclease subunit A (1217 aa).

Residues 10-475 enclose the UvrD-like helicase ATP-binding domain; sequence VIWTDAQWQS…IDLSQNFRSR (466 aa). 31–38 provides a ligand contact to ATP; it reads AAAGSGKT. A UvrD-like helicase C-terminal domain is found at 476–786; sequence KEVLSTTNYI…RMMTIHSSKG (311 aa).

The protein belongs to the helicase family. AddA subfamily. In terms of assembly, heterodimer of AddA and AddB/RexB. It depends on Mg(2+) as a cofactor.

The enzyme catalyses Couples ATP hydrolysis with the unwinding of duplex DNA by translocating in the 3'-5' direction.. It catalyses the reaction ATP + H2O = ADP + phosphate + H(+). Its function is as follows. The heterodimer acts as both an ATP-dependent DNA helicase and an ATP-dependent, dual-direction single-stranded exonuclease. Recognizes the chi site generating a DNA molecule suitable for the initiation of homologous recombination. The AddA nuclease domain is required for chi fragment generation; this subunit has the helicase and 3' -&gt; 5' nuclease activities. This chain is ATP-dependent helicase/nuclease subunit A, found in Staphylococcus aureus (strain Mu3 / ATCC 700698).